The following is a 180-amino-acid chain: ATP-dependent protease subunit HslV (180 aa).

Residue T8 is part of the active site. The Na(+) site is built by G165, C168, and T171.

It belongs to the peptidase T1B family. HslV subfamily. As to quaternary structure, a double ring-shaped homohexamer of HslV is capped on each side by a ring-shaped HslU homohexamer. The assembly of the HslU/HslV complex is dependent on binding of ATP.

The protein resides in the cytoplasm. The catalysed reaction is ATP-dependent cleavage of peptide bonds with broad specificity.. With respect to regulation, allosterically activated by HslU binding. Functionally, protease subunit of a proteasome-like degradation complex believed to be a general protein degrading machinery. The protein is ATP-dependent protease subunit HslV of Halalkalibacterium halodurans (strain ATCC BAA-125 / DSM 18197 / FERM 7344 / JCM 9153 / C-125) (Bacillus halodurans).